The following is a 353-amino-acid chain: MTATLERRESASLWSRFCDWITSTDNRLYIGWFGVLMIPLLLTATSVFIIAFIAAPPVDIDGIREPVSGSLLYGNNIISGAIVPTSAAIGLHFYPIWEAASLDEWLYNGGPYEMIVLHFLLGVCCYMGREWELSFRLGMRPWIAVAYSAPVAAATAVFLIYPIGQGSFSDGMPLGISGTFNFMIVFQAEHNILMHPFHMLGVAGVFGGSLFSAMHGSLVTSSLIRETTENESANAGYKFGQEEETYNIVAAHGYFGRLIFQYASFNNSRALHFFLAAWPVIGIWFTALGISTMAFNLNGFNFNQSVVDSQGRVINTWADIINRANLGMEVMHERNAHNFPLDLASVEAPSVNG.

Threonine 2 carries the post-translational modification N-acetylthreonine. At threonine 2 the chain carries Phosphothreonine. Transmembrane regions (helical) follow at residues 29 to 46 (YIGW…TATS), 118 to 133 (HFLL…EWEL), and 142 to 156 (WIAV…AATA). Histidine 118 contacts chlorophyll a. Tyrosine 126 is a pheophytin a binding site. [CaMn4O5] cluster is bound by residues aspartate 170 and glutamate 189. The helical transmembrane segment at 197–218 (FHMLGVAGVFGGSLFSAMHGSL) threads the bilayer. Histidine 198 is a chlorophyll a binding site. A quinone is bound by residues histidine 215 and 264–265 (SF). Residue histidine 215 coordinates Fe cation. Histidine 272 serves as a coordination point for Fe cation. Residues 274-288 (FLAAWPVIGIWFTAL) form a helical membrane-spanning segment. Residues histidine 332, glutamate 333, aspartate 342, and alanine 344 each contribute to the [CaMn4O5] cluster site. Positions 345-353 (SVEAPSVNG) are excised as a propeptide.

The protein belongs to the reaction center PufL/M/PsbA/D family. In terms of assembly, PSII is composed of 1 copy each of membrane proteins PsbA, PsbB, PsbC, PsbD, PsbE, PsbF, PsbH, PsbI, PsbJ, PsbK, PsbL, PsbM, PsbT, PsbX, PsbY, PsbZ, Psb30/Ycf12, at least 3 peripheral proteins of the oxygen-evolving complex and a large number of cofactors. It forms dimeric complexes. It depends on The D1/D2 heterodimer binds P680, chlorophylls that are the primary electron donor of PSII, and subsequent electron acceptors. It shares a non-heme iron and each subunit binds pheophytin, quinone, additional chlorophylls, carotenoids and lipids. D1 provides most of the ligands for the Mn4-Ca-O5 cluster of the oxygen-evolving complex (OEC). There is also a Cl(-1) ion associated with D1 and D2, which is required for oxygen evolution. The PSII complex binds additional chlorophylls, carotenoids and specific lipids. as a cofactor. Tyr-161 forms a radical intermediate that is referred to as redox-active TyrZ, YZ or Y-Z. Post-translationally, C-terminally processed by CTPA; processing is essential to allow assembly of the oxygen-evolving complex and thus photosynthetic growth.

Its subcellular location is the plastid. The protein localises to the chloroplast thylakoid membrane. The enzyme catalyses 2 a plastoquinone + 4 hnu + 2 H2O = 2 a plastoquinol + O2. Its function is as follows. Photosystem II (PSII) is a light-driven water:plastoquinone oxidoreductase that uses light energy to abstract electrons from H(2)O, generating O(2) and a proton gradient subsequently used for ATP formation. It consists of a core antenna complex that captures photons, and an electron transfer chain that converts photonic excitation into a charge separation. The D1/D2 (PsbA/PsbD) reaction center heterodimer binds P680, the primary electron donor of PSII as well as several subsequent electron acceptors. The polypeptide is Photosystem II protein D1 (Chlorokybus atmophyticus (Soil alga)).